Consider the following 145-residue polypeptide: Large ribosomal subunit protein cL37 (145 aa).

The N-terminal 63 residues, 1–63 (MALLCFNSFT…PRKNSIFIAS (63 aa)), are a transit peptide targeting the chloroplast. Positions 125–145 (KRRLRKKGNWPPSKMKKLEGV) are disordered.

It belongs to the chloroplast-specific ribosomal protein cL37 family. In terms of assembly, part of the 50S ribosomal subunit.

Its subcellular location is the plastid. The protein resides in the chloroplast. This Pisum sativum (Garden pea) protein is Large ribosomal subunit protein cL37 (PSRP5).